The sequence spans 357 residues: Sulfate/thiosulfate import ATP-binding protein CysA (357 aa).

The region spanning 3–237 (ITIQNLNKHF…PENAFVTEFL (235 aa)) is the ABC transporter domain. An ATP-binding site is contributed by 35-42 (GPSGCGKT).

Belongs to the ABC transporter superfamily. Sulfate/tungstate importer (TC 3.A.1.6) family. The complex is composed of two ATP-binding proteins (CysA), two transmembrane proteins (CysT and CysW) and a solute-binding protein (CysP).

It localises to the cell inner membrane. The enzyme catalyses sulfate(out) + ATP + H2O = sulfate(in) + ADP + phosphate + H(+). The catalysed reaction is thiosulfate(out) + ATP + H2O = thiosulfate(in) + ADP + phosphate + H(+). In terms of biological role, part of the ABC transporter complex CysAWTP involved in sulfate/thiosulfate import. Responsible for energy coupling to the transport system. The sequence is that of Sulfate/thiosulfate import ATP-binding protein CysA from Neisseria meningitidis serogroup A / serotype 4A (strain DSM 15465 / Z2491).